The chain runs to 423 residues: UPF0229 protein Psyr_4632 (423 aa).

The interval 65–110 (HHGRGGKQTVVHPGNKEFTTGEHIARPQGGGGGKGPGKAGNSGEGM) is disordered. Residues 92-107 (QGGGGGKGPGKAGNSG) are compositionally biased toward gly residues.

The protein belongs to the UPF0229 family.

This Pseudomonas syringae pv. syringae (strain B728a) protein is UPF0229 protein Psyr_4632.